Reading from the N-terminus, the 366-residue chain is Ribosomal RNA large subunit methyltransferase M (366 aa).

S-adenosyl-L-methionine contacts are provided by residues serine 188, cysteine 221–glycine 224, aspartate 240, aspartate 260, and aspartate 277. The active-site Proton acceptor is lysine 306.

Belongs to the class I-like SAM-binding methyltransferase superfamily. RNA methyltransferase RlmE family. RlmM subfamily. Monomer.

Its subcellular location is the cytoplasm. The catalysed reaction is cytidine(2498) in 23S rRNA + S-adenosyl-L-methionine = 2'-O-methylcytidine(2498) in 23S rRNA + S-adenosyl-L-homocysteine + H(+). Its function is as follows. Catalyzes the 2'-O-methylation at nucleotide C2498 in 23S rRNA. This Klebsiella pneumoniae (strain 342) protein is Ribosomal RNA large subunit methyltransferase M.